A 250-amino-acid chain; its full sequence is Envelope glycoprotein L (250 aa).

Positions 1–18 (MELLLFVMSLILLTFSKA) are cleaved as a signal peptide. The gL betaherpesvirus-type domain maps to 31-239 (KLDDCIAAVI…ETYNSKLPFR (209 aa)). C136 and C141 are disulfide-bonded.

This sequence belongs to the herpesviridae glycoprotein L (gL) family. Betaherpesvirinae gL subfamily. As to quaternary structure, interacts with glycoprotein H (gH); this interaction is necessary for the correct processing and cell surface expression of gH. Part of a gH-gL-gO complex.

Its subcellular location is the virion membrane. The protein localises to the host cell membrane. The protein resides in the host Golgi apparatus. It localises to the host trans-Golgi network. Functionally, the heterodimer glycoprotein H-glycoprotein L is required for the fusion of viral and plasma membranes leading to virus entry into the host cell. Acts as a functional inhibitor of gH and maintains gH in an inhibited form. Upon binding to host integrins, gL dissociates from gH leading to activation of the viral fusion glycoproteins gB and gH. This is Envelope glycoprotein L from Human herpesvirus 6A (strain Uganda-1102) (HHV-6 variant A).